Reading from the N-terminus, the 341-residue chain is GTP 3',8-cyclase (341 aa).

The Radical SAM core domain maps to 17-235 (TYGRVATDLR…LRTRFELTAE (219 aa)). R26 contributes to the GTP binding site. [4Fe-4S] cluster contacts are provided by C33 and C37. S-adenosyl-L-methionine is bound at residue Y39. Residue C40 coordinates [4Fe-4S] cluster. R77 serves as a coordination point for GTP. G81 contributes to the S-adenosyl-L-methionine binding site. T108 contributes to the GTP binding site. S132 is a binding site for S-adenosyl-L-methionine. Residue K169 coordinates GTP. An S-adenosyl-L-methionine-binding site is contributed by M203. [4Fe-4S] cluster contacts are provided by C268 and C271. 273-275 (RTR) is a GTP binding site. C285 serves as a coordination point for [4Fe-4S] cluster.

It belongs to the radical SAM superfamily. MoaA family. In terms of assembly, monomer and homodimer. The cofactor is [4Fe-4S] cluster.

The enzyme catalyses GTP + AH2 + S-adenosyl-L-methionine = (8S)-3',8-cyclo-7,8-dihydroguanosine 5'-triphosphate + 5'-deoxyadenosine + L-methionine + A + H(+). Its pathway is cofactor biosynthesis; molybdopterin biosynthesis. In terms of biological role, catalyzes the cyclization of GTP to (8S)-3',8-cyclo-7,8-dihydroguanosine 5'-triphosphate. In Streptomyces coelicolor (strain ATCC BAA-471 / A3(2) / M145), this protein is GTP 3',8-cyclase.